The following is a 302-amino-acid chain: Bifunctional protein FolD (302 aa).

Residues 171-173 (GRS), Ser-196, and Ile-237 each bind NADP(+).

This sequence belongs to the tetrahydrofolate dehydrogenase/cyclohydrolase family. Homodimer.

It carries out the reaction (6R)-5,10-methylene-5,6,7,8-tetrahydrofolate + NADP(+) = (6R)-5,10-methenyltetrahydrofolate + NADPH. It catalyses the reaction (6R)-5,10-methenyltetrahydrofolate + H2O = (6R)-10-formyltetrahydrofolate + H(+). The protein operates within one-carbon metabolism; tetrahydrofolate interconversion. In terms of biological role, catalyzes the oxidation of 5,10-methylenetetrahydrofolate to 5,10-methenyltetrahydrofolate and then the hydrolysis of 5,10-methenyltetrahydrofolate to 10-formyltetrahydrofolate. The protein is Bifunctional protein FolD of Sphingopyxis alaskensis (strain DSM 13593 / LMG 18877 / RB2256) (Sphingomonas alaskensis).